Reading from the N-terminus, the 361-residue chain is Large ribosomal subunit protein uL3 (361 aa).

Residues 339–361 form a disordered region; it reads RPPKKKPPVQRPQITYVSVESKQ. Positions 350 to 361 are enriched in polar residues; that stretch reads PQITYVSVESKQ.

The protein belongs to the universal ribosomal protein uL3 family. In terms of assembly, part of the 50S ribosomal subunit. Forms a cluster with proteins L14 and L24e.

In terms of biological role, one of the primary rRNA binding proteins, it binds directly near the 3'-end of the 23S rRNA, where it nucleates assembly of the 50S subunit. This is Large ribosomal subunit protein uL3 from Pyrococcus abyssi (strain GE5 / Orsay).